The primary structure comprises 322 residues: Mitochondrial thiamine pyrophosphate carrier 1 (322 aa).

3 Solcar repeats span residues 12–111 (GSKT…VTLG), 122–208 (PAAA…LRLP), and 215–310 (PFGS…VLGI). 6 helical membrane passes run 18–38 (MIAG…LDVV), 92–108 (LMYV…YRSV), 128–148 (FIAG…LDLL), 180–200 (FFQG…IFFA), 221–241 (ASAG…FDLI), and 285–302 (GLTV…VTMW).

Belongs to the mitochondrial carrier (TC 2.A.29) family.

The protein resides in the mitochondrion inner membrane. Functionally, mitochondrial transporter that mediates uptake of thiamine pyrophosphate (ThPP) into mitochondria. This is Mitochondrial thiamine pyrophosphate carrier 1 (tpc1) from Botryotinia fuckeliana (strain B05.10) (Noble rot fungus).